The sequence spans 294 residues: Acetyl-coenzyme A carboxylase carboxyl transferase subunit beta (294 aa).

The 265-residue stretch at 30 to 294 (IMTKCPECKK…PGVGGEVDGE (265 aa)) folds into the CoA carboxyltransferase N-terminal domain. Zn(2+) contacts are provided by Cys-34, Cys-37, Cys-53, and Cys-56. The C4-type zinc-finger motif lies at 34 to 56 (CPECKKIMYTKELQKNLMVCNYC).

It belongs to the AccD/PCCB family. In terms of assembly, acetyl-CoA carboxylase is a heterohexamer composed of biotin carboxyl carrier protein (AccB), biotin carboxylase (AccC) and two subunits each of ACCase subunit alpha (AccA) and ACCase subunit beta (AccD). Zn(2+) serves as cofactor.

Its subcellular location is the cytoplasm. The catalysed reaction is N(6)-carboxybiotinyl-L-lysyl-[protein] + acetyl-CoA = N(6)-biotinyl-L-lysyl-[protein] + malonyl-CoA. It functions in the pathway lipid metabolism; malonyl-CoA biosynthesis; malonyl-CoA from acetyl-CoA: step 1/1. Its function is as follows. Component of the acetyl coenzyme A carboxylase (ACC) complex. Biotin carboxylase (BC) catalyzes the carboxylation of biotin on its carrier protein (BCCP) and then the CO(2) group is transferred by the transcarboxylase to acetyl-CoA to form malonyl-CoA. The protein is Acetyl-coenzyme A carboxylase carboxyl transferase subunit beta of Listeria monocytogenes serovar 1/2a (strain ATCC BAA-679 / EGD-e).